Consider the following 37-residue polypeptide: Mu-agatoxin-Aa1b (37 aa).

4 disulfide bridges follow: cysteine 2–cysteine 18, cysteine 9–cysteine 23, cysteine 17–cysteine 33, and cysteine 25–cysteine 31. A Serine amide modification is found at serine 37.

It belongs to the neurotoxin 07 (Beta/delta-agtx) family. 01 (aga-2) subfamily. Expressed by the venom gland.

It is found in the secreted. In terms of biological role, insecticidal neurotoxin that induces an irreversible spastic paralysis when injected into insects. Modifies presynaptic voltage-gated sodium channels (Nav), causing them to open at the normal resting potential of the nerve. This leads to spontaneous release of neurotransmitter and repetitive action potentials in motor neurons. This is Mu-agatoxin-Aa1b from Agelenopsis aperta (North American funnel-web spider).